The sequence spans 180 residues: ATP-dependent protease subunit HslV (180 aa).

Thr-2 is an active-site residue. Na(+) is bound by residues Gly-157, Cys-160, and Thr-163.

This sequence belongs to the peptidase T1B family. HslV subfamily. As to quaternary structure, a double ring-shaped homohexamer of HslV is capped on each side by a ring-shaped HslU homohexamer. The assembly of the HslU/HslV complex is dependent on binding of ATP.

The protein localises to the cytoplasm. The catalysed reaction is ATP-dependent cleavage of peptide bonds with broad specificity.. Allosterically activated by HslU binding. In terms of biological role, protease subunit of a proteasome-like degradation complex believed to be a general protein degrading machinery. This Tolumonas auensis (strain DSM 9187 / NBRC 110442 / TA 4) protein is ATP-dependent protease subunit HslV.